An 858-amino-acid polypeptide reads, in one-letter code: DNA mismatch repair protein MutS (858 aa).

613 to 620 (GPNMAGKS) contacts ATP.

The protein belongs to the DNA mismatch repair MutS family.

This protein is involved in the repair of mismatches in DNA. It is possible that it carries out the mismatch recognition step. This protein has a weak ATPase activity. The protein is DNA mismatch repair protein MutS of Dehalococcoides mccartyi (strain CBDB1).